The primary structure comprises 664 residues: Intraflagellar transport protein 70A2 (664 aa).

7 TPR repeats span residues 11–44, 45–78, 153–186, 188–220, 395–423, 424–456, and 458–491; these read DGEF…SPRS, RAGL…HPEL, PDGL…SGYQ, DVSY…GIRQ, QVQE…EKYI, PVLM…CNDH, and VWKL…NYDN. A coiled-coil region spans residues 507–534; the sequence is YIMTSQNEEAEELMRKIEKEEEQLSYGD. A TPR 8 repeat occupies 543 to 576; sequence CIVNLVIGTLYCAKGNYDFGISRVIKSLEPYHKK.

It belongs to the TTC30/dfy-1/fleer family. Interacts wit the IFT B complex component IFT52.

The protein resides in the cell projection. It localises to the cilium. Required for polyglutamylation of axonemal tubulin. Plays a role in anterograde intraflagellar transport (IFT), the process by which cilia precursors are transported from the base of the cilium to the site of their incorporation at the tip. This is Intraflagellar transport protein 70A2 (Ift70a2) from Rattus norvegicus (Rat).